The sequence spans 123 residues: uncharacterized protein (123 aa).

Positions 89-123 are disordered; that stretch reads GVGGRKLGSEGQSLSENSEQRSLMRWGCGGSSERR. The span at 98–109 shows a compositional bias: polar residues; sequence EGQSLSENSEQR.

This is an uncharacterized protein from Encephalitozoon cuniculi (strain GB-M1) (Microsporidian parasite).